The primary structure comprises 826 residues: Eukaryotic translation initiation factor 3 subunit C (826 aa).

Disordered stretches follow at residues M1–A71 and S205–K227. Positions D10–L20 are enriched in acidic residues. Over residues Y21–D30 the composition is skewed to low complexity. Positions S32–D65 are enriched in acidic residues. Residues K218 to K227 show a composition bias toward basic and acidic residues. Residues F605 to Q779 enclose the PCI domain.

Belongs to the eIF-3 subunit C family. In terms of assembly, component of the eukaryotic translation initiation factor 3 (eIF-3) complex.

Its subcellular location is the cytoplasm. Component of the eukaryotic translation initiation factor 3 (eIF-3) complex, which is involved in protein synthesis of a specialized repertoire of mRNAs and, together with other initiation factors, stimulates binding of mRNA and methionyl-tRNAi to the 40S ribosome. The eIF-3 complex specifically targets and initiates translation of a subset of mRNAs involved in cell proliferation. This Yarrowia lipolytica (strain CLIB 122 / E 150) (Yeast) protein is Eukaryotic translation initiation factor 3 subunit C.